A 348-amino-acid polypeptide reads, in one-letter code: tRNA N6-adenosine threonylcarbamoyltransferase (348 aa).

2 residues coordinate Fe cation: His-111 and His-115. Substrate-binding positions include 134-138 (LVSGG), Asp-167, Gly-180, Asp-184, and Asn-279. A Fe cation-binding site is contributed by Asp-307.

This sequence belongs to the KAE1 / TsaD family. It depends on Fe(2+) as a cofactor.

It is found in the cytoplasm. It catalyses the reaction L-threonylcarbamoyladenylate + adenosine(37) in tRNA = N(6)-L-threonylcarbamoyladenosine(37) in tRNA + AMP + H(+). Required for the formation of a threonylcarbamoyl group on adenosine at position 37 (t(6)A37) in tRNAs that read codons beginning with adenine. Is involved in the transfer of the threonylcarbamoyl moiety of threonylcarbamoyl-AMP (TC-AMP) to the N6 group of A37, together with TsaE and TsaB. TsaD likely plays a direct catalytic role in this reaction. The protein is tRNA N6-adenosine threonylcarbamoyltransferase of Synechocystis sp. (strain ATCC 27184 / PCC 6803 / Kazusa).